The primary structure comprises 335 residues: Glycerol-3-phosphate dehydrogenase [NAD(P)+] (335 aa).

The NADPH site is built by S15, Y16, H36, and K110. Positions 110, 139, and 141 each coordinate sn-glycerol 3-phosphate. A143 contacts NADPH. Residues K195, D248, S258, R259, and N260 each coordinate sn-glycerol 3-phosphate. Residue K195 is the Proton acceptor of the active site. Position 259 (R259) interacts with NADPH. Residues V283 and E285 each contribute to the NADPH site.

This sequence belongs to the NAD-dependent glycerol-3-phosphate dehydrogenase family.

It localises to the cytoplasm. It carries out the reaction sn-glycerol 3-phosphate + NAD(+) = dihydroxyacetone phosphate + NADH + H(+). It catalyses the reaction sn-glycerol 3-phosphate + NADP(+) = dihydroxyacetone phosphate + NADPH + H(+). It functions in the pathway membrane lipid metabolism; glycerophospholipid metabolism. Functionally, catalyzes the reduction of the glycolytic intermediate dihydroxyacetone phosphate (DHAP) to sn-glycerol 3-phosphate (G3P), the key precursor for phospholipid synthesis. The chain is Glycerol-3-phosphate dehydrogenase [NAD(P)+] from Haemophilus influenzae (strain 86-028NP).